The primary structure comprises 193 residues: Endoribonuclease YbeY (193 aa).

3 residues coordinate Zn(2+): histidine 109, histidine 113, and histidine 119. The disordered stretch occupies residues glycine 143–threonine 193. The segment covering arginine 147–threonine 163 has biased composition (basic and acidic residues). Residues arginine 164–glycine 181 are compositionally biased toward low complexity.

The protein belongs to the endoribonuclease YbeY family. Zn(2+) serves as cofactor.

It localises to the cytoplasm. Functionally, single strand-specific metallo-endoribonuclease involved in late-stage 70S ribosome quality control and in maturation of the 3' terminus of the 16S rRNA. In Anaeromyxobacter dehalogenans (strain 2CP-C), this protein is Endoribonuclease YbeY.